Reading from the N-terminus, the 436-residue chain is GTPase Der (436 aa).

2 EngA-type G domains span residues 3-168 (PLIA…PESD) and 177-352 (IRLA…QNRS). Residues 9 to 16 (GRPNVGKS), 56 to 60 (DTGGY), 120 to 123 (NKAE), 183 to 190 (GRPNVGKS), 230 to 234 (DTAGL), and 295 to 298 (NKWD) each bind GTP. The region spanning 353–436 (RKISTSALNR…VTISLRFMQK (84 aa)) is the KH-like domain.

The protein belongs to the TRAFAC class TrmE-Era-EngA-EngB-Septin-like GTPase superfamily. EngA (Der) GTPase family. Associates with the 50S ribosomal subunit.

Its function is as follows. GTPase that plays an essential role in the late steps of ribosome biogenesis. The polypeptide is GTPase Der (Chlorobium luteolum (strain DSM 273 / BCRC 81028 / 2530) (Pelodictyon luteolum)).